Consider the following 271-residue polypeptide: Dermonecrotic toxin LhSicTox-alphaIA2aiv (271 aa).

His3 is a catalytic residue. Mg(2+)-binding residues include Glu23 and Asp25. The active-site Nucleophile is His39. Disulfide bonds link Cys43–Cys49 and Cys45–Cys188. Mg(2+) is bound at residue Asp83.

The protein belongs to the arthropod phospholipase D family. Class II subfamily. Mg(2+) serves as cofactor. Expressed by the venom gland.

The protein resides in the secreted. It catalyses the reaction an N-(acyl)-sphingosylphosphocholine = an N-(acyl)-sphingosyl-1,3-cyclic phosphate + choline. It carries out the reaction an N-(acyl)-sphingosylphosphoethanolamine = an N-(acyl)-sphingosyl-1,3-cyclic phosphate + ethanolamine. The enzyme catalyses a 1-acyl-sn-glycero-3-phosphocholine = a 1-acyl-sn-glycero-2,3-cyclic phosphate + choline. The catalysed reaction is a 1-acyl-sn-glycero-3-phosphoethanolamine = a 1-acyl-sn-glycero-2,3-cyclic phosphate + ethanolamine. In terms of biological role, dermonecrotic toxins cleave the phosphodiester linkage between the phosphate and headgroup of certain phospholipids (sphingolipid and lysolipid substrates), forming an alcohol (often choline) and a cyclic phosphate. This toxin acts on sphingomyelin (SM). It may also act on ceramide phosphoethanolamine (CPE), lysophosphatidylcholine (LPC) and lysophosphatidylethanolamine (LPE), but not on lysophosphatidylserine (LPS), and lysophosphatidylglycerol (LPG). It acts by transphosphatidylation, releasing exclusively cyclic phosphate products as second products. Induces dermonecrosis, hemolysis, increased vascular permeability, edema, inflammatory response, and platelet aggregation. This is Dermonecrotic toxin LhSicTox-alphaIA2aiv from Loxosceles hirsuta (Recluse spider).